Consider the following 278-residue polypeptide: Tryptophan synthase alpha chain (278 aa).

Residues glutamate 50 and aspartate 61 each act as proton acceptor in the active site.

This sequence belongs to the TrpA family. Tetramer of two alpha and two beta chains.

It carries out the reaction (1S,2R)-1-C-(indol-3-yl)glycerol 3-phosphate + L-serine = D-glyceraldehyde 3-phosphate + L-tryptophan + H2O. Its pathway is amino-acid biosynthesis; L-tryptophan biosynthesis; L-tryptophan from chorismate: step 5/5. Its function is as follows. The alpha subunit is responsible for the aldol cleavage of indoleglycerol phosphate to indole and glyceraldehyde 3-phosphate. This chain is Tryptophan synthase alpha chain, found in Rhodopseudomonas palustris (strain BisA53).